A 203-amino-acid polypeptide reads, in one-letter code: High frequency lysogenization protein HflD homolog (203 aa).

This sequence belongs to the HflD family.

It is found in the cytoplasm. Its subcellular location is the cell inner membrane. This chain is High frequency lysogenization protein HflD homolog, found in Histophilus somni (strain 2336) (Haemophilus somnus).